The primary structure comprises 130 residues: Small ribosomal subunit protein uS9 (130 aa).

Positions 105–130 (TRDPRMKERKKYGLKGARRAPQFSKR) are disordered. The span at 111–130 (KERKKYGLKGARRAPQFSKR) shows a compositional bias: basic residues.

The protein belongs to the universal ribosomal protein uS9 family.

This is Small ribosomal subunit protein uS9 from Bacillus pumilus (strain SAFR-032).